The primary structure comprises 333 residues: 5-formaminoimidazole-4-carboxamide-1-(beta)-D-ribofuranosyl 5'-monophosphate synthetase (333 aa).

2 residues coordinate 5-amino-1-(5-phospho-beta-D-ribosyl)imidazole-4-carboxamide: histidine 9 and serine 73. The region spanning 94 to 324 is the ATP-grasp domain; that stretch reads RNLFEWEANQ…ISREIKLAIN (231 aa). Residues 124–184 and glutamate 206 each bind ATP; that span reads PEDI…VPMY. Residue asparagine 230 coordinates 5-amino-1-(5-phospho-beta-D-ribosyl)imidazole-4-carboxamide. Positions 269 and 282 each coordinate Mg(2+).

This sequence belongs to the phosphohexose mutase family. It depends on Mg(2+) as a cofactor. Requires Mn(2+) as cofactor.

The catalysed reaction is 5-amino-1-(5-phospho-beta-D-ribosyl)imidazole-4-carboxamide + formate + ATP = 5-formamido-1-(5-phospho-D-ribosyl)imidazole-4-carboxamide + ADP + phosphate. It functions in the pathway purine metabolism; IMP biosynthesis via de novo pathway; 5-formamido-1-(5-phospho-D-ribosyl)imidazole-4-carboxamide from 5-amino-1-(5-phospho-D-ribosyl)imidazole-4-carboxamide (formate route): step 1/1. In terms of biological role, catalyzes the ATP- and formate-dependent formylation of 5-aminoimidazole-4-carboxamide-1-beta-d-ribofuranosyl 5'-monophosphate (AICAR) to 5-formaminoimidazole-4-carboxamide-1-beta-d-ribofuranosyl 5'-monophosphate (FAICAR) in the absence of folates. The sequence is that of 5-formaminoimidazole-4-carboxamide-1-(beta)-D-ribofuranosyl 5'-monophosphate synthetase from Sulfurisphaera tokodaii (strain DSM 16993 / JCM 10545 / NBRC 100140 / 7) (Sulfolobus tokodaii).